The following is a 212-amino-acid chain: Suppressor of cytokine signaling 1 (212 aa).

A disordered region spans residues 1–55; that stretch reads MVARNQVAADNAISPAAEPRRRSEPSSSSSSSSPAAPVRPRPCPAVPAPAPGDTH. Residues 25–36 are compositionally biased toward low complexity; that stretch reads PSSSSSSSSPAA. Residues 37–50 are compositionally biased toward pro residues; it reads PVRPRPCPAVPAPA. Positions 56 to 67 are kinase inhibitory region (KIR); that stretch reads FRTFRSHSDYRR. The interval 68–79 is extended SH2 subdomain (ESS); it reads ITRTSALLDACG. The SH2 domain maps to 80–175; the sequence is FYWGPLSVHG…PLRQRRVRPL (96 aa). Residues 162–211 form the SOCS box domain; it reads MLGAPLRQRRVRPLQELCRQRIVAAVGRENLARIPLNPVLRDYLSSFPFQ. The tract at residues 174-183 is interaction with Elongin BC complex; the sequence is PLQELCRQRI.

This sequence belongs to the SOCS1 family. In terms of assembly, interacts with multiple activated proteins of the tyrosine kinase signaling pathway including JAK family kinases, TEC, KIT, GRB2 and VAV. Binding to JAKs is mediated through the KIR and SH2 domain to a phosphorylated tyrosine residue within the JAK JH1 domain. Binds the SH3 domain of GRB2 via diproline determinants in the N-terminus, and the N-terminal regulatory domain of VAV. Interacts with the Elongin BC complex (ELOB and ELOC). Component of an ECS CBC(SOCS1) E3 ubiquitin-protein ligase complex which contains Elongin BC, CUL5, RBX1 and SOCS1. Interacts (via SH2 domain and SOCS box) with TRIM8. Interacts with CUL2. Interacts with AXL and FGFR3. Interacts with INSR. Interacts with TRIM8. Interacts with DCUN1D1. Interacts with IFNGR1. High expression in thymus. Lower expression in lung and spleen. Expressed in both Th1 and Th2 cells.

The protein localises to the nucleus. The protein resides in the cytoplasmic vesicle. It participates in protein modification; protein ubiquitination. In terms of biological role, essential negative regulator of type I and type II interferon (IFN) signaling, as well as that of other cytokines, including IL2, IL4, IL6 and leukemia inhibitory factor (LIF). Downregulates cytokine signaling by inhibiting the JAK/STAT signaling pathway. Acts by binding to JAK proteins and to IFNGR1 and inhibiting their kinase activity. In vitro, suppresses Tec protein-tyrosine activity. Regulates IFN-gamma (IFNG)-mediated sensory neuron survival. Probable substrate recognition component of an ECS (Elongin BC-CUL2/5-SOCS-box protein) E3 ubiquitin ligase complex which mediates the ubiquitination and subsequent proteasomal degradation of target proteins. The polypeptide is Suppressor of cytokine signaling 1 (Mus musculus (Mouse)).